A 534-amino-acid chain; its full sequence is Autophagy-related protein 20 (534 aa).

The segment at M1–S21 is disordered. The PX domain maps to M1 to W137. A 1,2-diacyl-sn-glycero-3-phospho-(1D-myo-inositol-3-phosphate)-binding residues include R55, S57, K81, and R104. Positions A179–L272 are disordered. Residues S203–G212 show a composition bias toward low complexity. Positions Y245–N263 are enriched in polar residues.

It belongs to the sorting nexin family.

It is found in the cytoplasm. Its subcellular location is the endosome membrane. It localises to the preautophagosomal structure membrane. Required for cytoplasm to vacuole transport (Cvt), pexophagy and mitophagy. Also involved in endoplasmic reticulum-specific autophagic process and is essential for the survival of cells subjected to severe ER stress. Functions in protein retrieval from the endocytic pathway. The polypeptide is Autophagy-related protein 20 (atg20) (Schizosaccharomyces pombe (strain 972 / ATCC 24843) (Fission yeast)).